The chain runs to 377 residues: Nitric oxide reductase FlRd-NAD(+) reductase (377 aa).

The protein belongs to the FAD-dependent oxidoreductase family. It depends on FAD as a cofactor.

The protein localises to the cytoplasm. The enzyme catalyses 2 reduced [nitric oxide reductase rubredoxin domain] + NAD(+) + H(+) = 2 oxidized [nitric oxide reductase rubredoxin domain] + NADH. It functions in the pathway nitrogen metabolism; nitric oxide reduction. In terms of biological role, one of at least two accessory proteins for anaerobic nitric oxide (NO) reductase. Reduces the rubredoxin moiety of NO reductase. This is Nitric oxide reductase FlRd-NAD(+) reductase from Escherichia coli (strain SE11).